The following is a 261-amino-acid chain: 3-hydroxyacyl-CoA dehydrogenase type-2 (261 aa).

Alanine 2 is subject to N-acetylalanine. NAD(+)-binding residues include serine 20, leucine 22, and aspartate 41. Lysine 53 carries the N6-acetyllysine; alternate modification. Lysine 53 carries the post-translational modification N6-succinyllysine; alternate. Valine 65 contacts NAD(+). At lysine 69 the chain carries N6-acetyllysine. Residue cysteine 91 participates in NAD(+) binding. 2 positions are modified to N6-acetyllysine: lysine 99 and lysine 105. Substrate is bound at residue serine 155. Residues tyrosine 168, lysine 172, phenylalanine 201, and threonine 203 each contribute to the NAD(+) site. The active-site Proton acceptor is the tyrosine 168. Lysine 212 carries the N6-acetyllysine; alternate modification. An N6-succinyllysine; alternate modification is found at lysine 212.

This sequence belongs to the short-chain dehydrogenases/reductases (SDR) family. In terms of assembly, homotetramer. Component of mitochondrial ribonuclease P, a complex composed of TRMT10C/MRPP1, HSD17B10/MRPP2 and PRORP/MRPP3. Interacts with TRMT10C/MRPP1; forming the MRPP1-MRPP2 subcomplex of the mitochondrial ribonuclease P complex.

It is found in the mitochondrion. Its subcellular location is the mitochondrion matrix. It localises to the mitochondrion nucleoid. It catalyses the reaction a (3S)-3-hydroxyacyl-CoA + NAD(+) = a 3-oxoacyl-CoA + NADH + H(+). The catalysed reaction is (2S,3S)-3-hydroxy-2-methylbutanoyl-CoA + NAD(+) = 2-methyl-3-oxobutanoyl-CoA + NADH + H(+). It carries out the reaction testosterone + NAD(+) = androst-4-ene-3,17-dione + NADH + H(+). The enzyme catalyses 5alpha-androstane-3alpha,17beta-diol + NAD(+) = 17beta-hydroxy-5alpha-androstan-3-one + NADH + H(+). It catalyses the reaction 17beta-estradiol + NAD(+) = estrone + NADH + H(+). The catalysed reaction is cholate + NAD(+) = 3alpha,12alpha-dihydroxy-7-oxo-5beta-cholanate + NADH + H(+). It carries out the reaction (3S)-3-hydroxybutanoyl-CoA + NAD(+) = acetoacetyl-CoA + NADH + H(+). The enzyme catalyses (3S)-hydroxyoctanoyl-CoA + NAD(+) = 3-oxooctanoyl-CoA + NADH + H(+). It catalyses the reaction (3S)-hydroxyhexadecanoyl-CoA + NAD(+) = 3-oxohexadecanoyl-CoA + NADH + H(+). The catalysed reaction is 17beta-hydroxy-5alpha-androstan-3-one + NAD(+) = 5alpha-androstan-3,17-dione + NADH + H(+). It carries out the reaction 5alpha-pregnan-20beta-ol-3-one + NAD(+) = 5alpha-pregnane-3,20-dione + NADH + H(+). The enzyme catalyses 3alpha-hydroxy-5alpha-pregnan-20-one + NAD(+) = 5alpha-pregnane-3,20-dione + NADH + H(+). It catalyses the reaction cortisone + NAD(+) = 17alpha-hydroxypregn-4-en-3,11,20-trione-21-al + NADH + H(+). The catalysed reaction is 11-dehydrocorticosterone + NAD(+) = pregn-4-ene-3,11,20,21-tetraone + NADH + H(+). It carries out the reaction cortisol + NAD(+) = 11beta,17alpha-dihydroxypregn-4-ene-3,20,21-trione + NADH + H(+). The enzyme catalyses chenodeoxycholate + NAD(+) = 7-oxolithocholate + NADH + H(+). It catalyses the reaction ursodeoxycholate + NAD(+) = 7-oxolithocholate + NADH + H(+). The catalysed reaction is 3beta,7beta-dihydroxy-5beta-cholan-24-oate + NAD(+) = 3beta-hydroxy-7-oxo-5beta-cholan-24-oate + NADH + H(+). The protein operates within amino-acid degradation; L-isoleucine degradation. Its pathway is lipid metabolism; fatty acid beta-oxidation. It participates in steroid metabolism. It functions in the pathway lipid metabolism; bile acid biosynthesis. Mitochondrial dehydrogenase involved in pathways of fatty acid, branched-chain amino acid and steroid metabolism. Acts as (S)-3-hydroxyacyl-CoA dehydrogenase in mitochondrial fatty acid beta-oxidation, a major degradation pathway of fatty acids. Catalyzes the third step in the beta-oxidation cycle, namely the reversible conversion of (S)-3-hydroxyacyl-CoA to 3-ketoacyl-CoA. Preferentially accepts straight medium- and short-chain acyl-CoA substrates with highest efficiency for (3S)-hydroxybutanoyl-CoA. Acts as 3-hydroxy-2-methylbutyryl-CoA dehydrogenase in branched-chain amino acid catabolic pathway. Catalyzes the oxidation of 3-hydroxy-2-methylbutanoyl-CoA into 2-methyl-3-oxobutanoyl-CoA, a step in isoleucine degradation pathway. Has hydroxysteroid dehydrogenase activity toward steroid hormones and bile acids. Catalyzes the oxidation of 3alpha-, 17beta-, 20beta- and 21-hydroxysteroids and 7alpha- and 7beta-hydroxy bile acids. Oxidizes allopregnanolone/brexanolone at the 3alpha-hydroxyl group, which is known to be critical for the activation of gamma-aminobutyric acid receptors (GABAARs) chloride channel. Has phospholipase C-like activity toward cardiolipin and its oxidized species. Likely oxidizes the 2'-hydroxyl in the head group of cardiolipin to form a ketone intermediate that undergoes nucleophilic attack by water and fragments into diacylglycerol, dihydroxyacetone and orthophosphate. Has higher affinity for cardiolipin with oxidized fatty acids and may degrade these species during the oxidative stress response to protect cells from apoptosis. By interacting with intracellular amyloid-beta, it may contribute to the neuronal dysfunction associated with Alzheimer disease (AD). Essential for structural and functional integrity of mitochondria. In terms of biological role, in addition to mitochondrial dehydrogenase activity, moonlights as a component of mitochondrial ribonuclease P, a complex that cleaves tRNA molecules in their 5'-ends. Together with TRMT10C/MRPP1, forms a subcomplex of the mitochondrial ribonuclease P, named MRPP1-MRPP2 subcomplex, which displays functions that are independent of the ribonuclease P activity. The MRPP1-MRPP2 subcomplex catalyzes the formation of N(1)-methylguanine and N(1)-methyladenine at position 9 (m1G9 and m1A9, respectively) in tRNAs; HSD17B10/MRPP2 acting as a non-catalytic subunit. The MRPP1-MRPP2 subcomplex also acts as a tRNA maturation platform: following 5'-end cleavage by the mitochondrial ribonuclease P complex, the MRPP1-MRPP2 subcomplex enhances the efficiency of 3'-processing catalyzed by ELAC2, retains the tRNA product after ELAC2 processing and presents the nascent tRNA to the mitochondrial CCA tRNA nucleotidyltransferase TRNT1 enzyme. Associates with mitochondrial DNA complexes at the nucleoids to initiate RNA processing and ribosome assembly. The sequence is that of 3-hydroxyacyl-CoA dehydrogenase type-2 (Hsd17b10) from Rattus norvegicus (Rat).